The primary structure comprises 363 residues: DNA replication and repair protein RecF (363 aa).

Gly-30 to Thr-37 contributes to the ATP binding site.

Belongs to the RecF family.

Its subcellular location is the cytoplasm. In terms of biological role, the RecF protein is involved in DNA metabolism; it is required for DNA replication and normal SOS inducibility. RecF binds preferentially to single-stranded, linear DNA. It also seems to bind ATP. The polypeptide is DNA replication and repair protein RecF (Vibrio cholerae serotype O1 (strain ATCC 39541 / Classical Ogawa 395 / O395)).